A 26-amino-acid chain; its full sequence is Beta-hexosaminidase (26 aa).

Post-translationally, glycosylated. In terms of tissue distribution, detected in dry seeds and cotyledons.

The catalysed reaction is Hydrolysis of terminal non-reducing N-acetyl-D-hexosamine residues in N-acetyl-beta-D-hexosaminides.. Its activity is regulated as follows. Inhibited by AgNO(3) at a concentration of 0.1 mM. Strongly inhibited by CdCl(2), ZnCl(2) and FeCl(3) and moderately by CoCl(2), CuSO(4) and NiCl(2) at 10 mM concentration. CaCl(2), MgCl(2), MnSO(4) and KI also have a slight inhibitory effect of 20%-25% at 10 mM concentration. Activated to a small extent by MgCl(2) at 0.1 mM concentration but inhibited with increasing concentration. Not affected by carbohydrates such as fucose, galactose and glucose but displays a slight decrease in activity up to 25% with lactose, alpha-mannose and N-acetyl-galactosamine (GalNAc). In terms of biological role, has hexosaminidase activity. Active with both p-nitrophenyl-beta-D-N-acetylglucosamine (pNP-GlcNAc) and p-nitrophenyl-beta-D-N-acetylgalactosamine (pNP-GalNAc). Not active toward p-nitrophenyl-beta-D-N,N'-diacetylchitobiose (pNP-(GlcNAc)2) or p-nitrophenyl-beta-D-N,N',N''-triacetylchitobiose (pNP-(GlcNAc)3). Removes terminal GlcNAc and may be involved in storage protein degradation. This Lupinus albus (White lupine) protein is Beta-hexosaminidase.